The primary structure comprises 311 residues: Vomeronasal type-1 receptor 105 (311 aa).

At 1–17 (MMNKNSRLYTDSNIRNT) the chain is on the extracellular side. Residues 18–38 (FFAEIGIGVSANSLLLLFNIF) form a helical membrane-spanning segment. Residues 39–50 (KLICGQRSRLTD) are Cytoplasmic-facing. The chain crosses the membrane as a helical span at residues 51–71 (LPIGLLSLINLLMLLMTAFIA). The Extracellular portion of the chain corresponds to 72-94 (TDTFISWRGWDDIICKSLLYLYR). Cys-86 and Cys-173 are oxidised to a cystine. A helical membrane pass occupies residues 95–115 (TFRGLSLCTSCLLSVLQAIIL). Topologically, residues 116 to 135 (SPRSSCLAKFKHKPSHHISC) are cytoplasmic. Residues 136–156 (AILSLSVLYMFISSHLLVSII) form a helical membrane-spanning segment. The Extracellular portion of the chain corresponds to 157–188 (ATPNLTTNDFIHVTQWCSILPMSYLMQSMFST). An N-linked (GlcNAc...) asparagine glycan is attached at Asn-160. The helical transmembrane segment at 189 to 209 (LLAIRDVFLISLMVLSTWYMV) threads the bilayer. The Cytoplasmic portion of the chain corresponds to 210–239 (ALLCRHRKQTRHLQGTSLSPKASPEQRATR). Residues 240–260 (SILMLMSLFVLMSVFDSIVCS) traverse the membrane as a helical segment. Residues 261–271 (SRTMYLNDPIS) lie on the Extracellular side of the membrane. The chain crosses the membrane as a helical span at residues 272–292 (YSYQLFMVHIYATVSPFVFIV). The Cytoplasmic segment spans residues 293-311 (TEKHIVNSLRSMCVKVMNV).

It belongs to the G-protein coupled receptor 1 family. As to expression, expressed in 1-4% of neurons of the vomeronasal organ. Only one pheromone receptor gene may be expressed in a particular neuron. Not expressed in the main olfactory epithelium.

The protein localises to the cell membrane. Putative pheromone receptor implicated in the regulation of social as well as reproductive behavior. This is Vomeronasal type-1 receptor 105 (Vom1r105) from Rattus norvegicus (Rat).